A 312-amino-acid polypeptide reads, in one-letter code: Glyceraldehyde-3-phosphate dehydrogenase, cytosolic (312 aa).

Residues 5-6 (RI) and Asp27 contribute to the NAD(+) site. D-glyceraldehyde 3-phosphate is bound by residues 144-146 (SCT), Thr175, 204-205 (TG), and Arg227. Cys145 functions as the Nucleophile in the catalytic mechanism. Asn309 is an NAD(+) binding site.

Belongs to the glyceraldehyde-3-phosphate dehydrogenase family. In terms of assembly, homotetramer.

The protein localises to the cytoplasm. The enzyme catalyses D-glyceraldehyde 3-phosphate + phosphate + NAD(+) = (2R)-3-phospho-glyceroyl phosphate + NADH + H(+). Its pathway is carbohydrate degradation; glycolysis; pyruvate from D-glyceraldehyde 3-phosphate: step 1/5. Its function is as follows. Key enzyme in glycolysis that catalyzes the first step of the pathway by converting D-glyceraldehyde 3-phosphate (G3P) into 3-phospho-D-glyceroyl phosphate. Essential for the maintenance of cellular ATP levels and carbohydrate metabolism. This is Glyceraldehyde-3-phosphate dehydrogenase, cytosolic (GapC) from Scenedesmus vacuolatus (Green alga).